The following is a 208-amino-acid chain: Glutathione S-transferase 2 (208 aa).

The GST N-terminal domain maps to methionine 1–glycine 78. Glutathione is bound by residues tyrosine 7, lysine 42, glutamine 49–leucine 50, and glutamine 62–serine 63. The GST C-terminal domain maps to asparagine 80 to valine 200.

This sequence belongs to the GST superfamily. Pi family. In terms of assembly, homodimer. In terms of tissue distribution, hypodermis, wall of the seminal receptacle and spermatozoa of adult worms.

It catalyses the reaction RX + glutathione = an S-substituted glutathione + a halide anion + H(+). Functionally, appears to play a central role in the parasite detoxification system. The polypeptide is Glutathione S-transferase 2 (GST2) (Onchocerca volvulus).